The sequence spans 211 residues: DELTA-stichotoxin-Hmg2a (211 aa).

Positions 1-19 are cleaved as a signal peptide; sequence MNRLIVLFLIVTMICATIA. A propeptide spanning residues 20–34 is cleaved from the precursor; the sequence is VPSREELEDQKEYKR. Residues 37–46 form a plays an important role in the hemolytic activity region; it reads ALAGTIIEGA. The tract at residues 45–64 is N-terminal region; that stretch reads GASLGFQILDKVLGELGKVS. Residues S88, V121, S139, P141, Y167, Y171, and Y172 each coordinate phosphocholine. The segment at 139–154 is trp-rich region, which is important for the binding to lipid membrane; that stretch reads SVPFDYNFYSNWWDVK. The Cell attachment site, crucial for protein stability signature appears at 177–179; the sequence is RGD.

This sequence belongs to the actinoporin family. Sea anemone subfamily. Octamer or nonamer in membranes. Monomer in the soluble state.

The protein resides in the secreted. The protein localises to the nematocyst. Its subcellular location is the target cell membrane. Pore-forming protein that forms cations-selective hydrophilic pores of around 1 nm and causes cardiac stimulation and cytolysis. Pore formation is a multi-step process that involves specific recognition of membrane sphingomyelin (but neither cholesterol nor phosphatidylcholine) using aromatic rich region and adjacent phosphocholine (POC) binding site, firm binding to the membrane (mainly driven by hydrophobic interactions) accompanied by the transfer of the N-terminal region to the lipid-water interface and finally pore formation after oligomerization of monomers. The protein is DELTA-stichotoxin-Hmg2a of Heteractis magnifica (Magnificent sea anemone).